Reading from the N-terminus, the 471-residue chain is 3-isopropylmalate dehydratase large subunit (471 aa).

[4Fe-4S] cluster contacts are provided by Cys347, Cys407, and Cys410.

It belongs to the aconitase/IPM isomerase family. LeuC type 1 subfamily. In terms of assembly, heterodimer of LeuC and LeuD. It depends on [4Fe-4S] cluster as a cofactor.

The catalysed reaction is (2R,3S)-3-isopropylmalate = (2S)-2-isopropylmalate. The protein operates within amino-acid biosynthesis; L-leucine biosynthesis; L-leucine from 3-methyl-2-oxobutanoate: step 2/4. In terms of biological role, catalyzes the isomerization between 2-isopropylmalate and 3-isopropylmalate, via the formation of 2-isopropylmaleate. The sequence is that of 3-isopropylmalate dehydratase large subunit from Geobacillus kaustophilus (strain HTA426).